A 192-amino-acid chain; its full sequence is uncharacterized protein (192 aa).

Positions 29-160 (QRQAAVLIPV…PLDVYRRGNS (132 aa)) constitute a Nudix hydrolase domain. The Nudix box motif lies at 67 to 89 (GAVDSTDASLIAAALREAQEEVA). Positions 83 and 87 each coordinate Mg(2+).

This sequence belongs to the Nudix hydrolase family. PCD1 subfamily. Mn(2+) is required as a cofactor. The cofactor is Mg(2+).

Its function is as follows. Probably mediates the hydrolysis of some nucleoside diphosphate derivatives. This is an uncharacterized protein from Salmonella agona (strain SL483).